The chain runs to 673 residues: Synaptotagmin-like protein 4 (673 aa).

In terms of domain architecture, RabBD spans 4 to 122; that stretch reads ILDLSFLSEM…KATGDWFYDQ (119 aa). An FYVE-type zinc finger spans residues 63–105; the sequence is CARCQEGLGRLIPKSSTCVGCNHLVCRECRVLESNGSWRCKVC. Residues 184–253 are disordered; sequence FEVPKTRSGK…PGNQNAVCGD (70 aa). Phosphoserine occurs at positions 202, 205, 218, 222, and 275. Residues 358 to 480 enclose the C2 1 domain; it reads VTGKIAFSLK…KLDKKLDHCL (123 aa). S490 bears the Phosphoserine mark. One can recognise a C2 2 domain in the interval 509–635; the sequence is PASKLPVGGD…ISNGEVVDWM (127 aa).

In terms of assembly, part of a ternary complex containing STX1A and RAB27A. Can bind both dominant negative and dominant active mutants of RAB27A. Binds STXBP1, RAB3A, RAB8A and RAB27B. Interacts with MYO5A. Detected in the pancreatic islet, in particular in insulin-positive beta cells, and in pituitary.

The protein localises to the membrane. The protein resides in the cytoplasmic vesicle. Its subcellular location is the secretory vesicle membrane. Its function is as follows. Modulates exocytosis of dense-core granules and secretion of hormones in the pancreas and the pituitary. Interacts with vesicles containing negatively charged phospholipids in a Ca(2+)-independent manner. The chain is Synaptotagmin-like protein 4 (Sytl4) from Mus musculus (Mouse).